Here is a 125-residue protein sequence, read N- to C-terminus: uncharacterized protein (125 aa).

Its subcellular location is the plastid. It localises to the chloroplast. This is an uncharacterized protein from Guillardia theta (Cryptophyte).